The chain runs to 569 residues: Beta-galactoside-specific lectin 3 (569 aa).

Positions 1 to 33 (MNAVMDSRGAWVSCFLILGLVFGATVKAETKFS) are cleaved as a signal peptide. Glutamate 198 is an active-site residue. 3 disulfides stabilise this stretch: cysteine 280/cysteine 311, cysteine 327/cysteine 346, and cysteine 370/cysteine 387. Residues 288 to 307 (EVRYWPLVIRPVLENSGAVD) constitute a propeptide, connecting peptide. Residues 314-441 (SEPTVRIVGR…YSLGQGWLAG (128 aa)) enclose the Ricin B-type lectin 1 domain. D-galactose is bound at residue 329–331 (DVR). N-linked (GlcNAc...) asparagine glycans are attached at residues asparagine 402 and asparagine 442. Positions 445–568 (APREVTIYGF…GNPNQMWLPV (124 aa)) constitute a Ricin B-type lectin 2 domain. Intrachain disulfides connect cysteine 458/cysteine 471 and cysteine 497/cysteine 514. 541 to 543 (DVA) contributes to the D-galactose binding site.

It belongs to the ribosome-inactivating protein family. Type 2 RIP subfamily. As to quaternary structure, disulfide-linked dimer of A and B chains.

The enzyme catalyses Endohydrolysis of the N-glycosidic bond at one specific adenosine on the 28S rRNA.. Functionally, the A chain is responsible for inhibiting protein synthesis through the catalytic inactivation of 60S ribosomal subunits by removing adenine from position 4,324 of 28S rRNA. The B chain binds to cell receptors and probably facilitates the entry into the cell of the A chain; B chains are also responsible for cell agglutination (lectin activity). Inhibits growth of the human tumor cell line Molt4. This Viscum album (European mistletoe) protein is Beta-galactoside-specific lectin 3.